Consider the following 572-residue polypeptide: Receptor-type adenylate cyclase GRESAG 4.2 (572 aa).

At 1-225 (RKTLLTFGLN…PNGNALTPAQ (225 aa)) the chain is on the extracellular side. 3 N-linked (GlcNAc...) asparagine glycosylation sites follow: asparagine 10, asparagine 77, and asparagine 152. A helical membrane pass occupies residues 226–251 (LDWCGWCRFACADTGSRLTVFLCCIM). The Cytoplasmic portion of the chain corresponds to 252–572 (RNKRDNDNAP…TVRRLSVALQ (321 aa)). Residues 269–424 (TLIFTDIESS…QTANTAARTE (156 aa)) enclose the Guanylate cyclase domain. Residues aspartate 274 and aspartate 317 each contribute to the Mg(2+) site.

Belongs to the adenylyl cyclase class-3 family. Mg(2+) is required as a cofactor.

It localises to the cell membrane. It carries out the reaction ATP = 3',5'-cyclic AMP + diphosphate. Could act as a receptor for an unknown ligand. This Trypanosoma brucei brucei protein is Receptor-type adenylate cyclase GRESAG 4.2 (GRESAG 4.2).